A 240-amino-acid polypeptide reads, in one-letter code: Fatty acid metabolism regulator protein (240 aa).

In terms of domain architecture, HTH gntR-type spans 6–74 (KGPASFAEKY…HGKPTRVNNF (69 aa)). A DNA-binding region (H-T-H motif) is located at residues 34–53 (ERELSELIGVTRTTLREVLQ).

Homodimer.

The protein localises to the cytoplasm. Multifunctional regulator of fatty acid metabolism. The chain is Fatty acid metabolism regulator protein from Shewanella oneidensis (strain ATCC 700550 / JCM 31522 / CIP 106686 / LMG 19005 / NCIMB 14063 / MR-1).